A 125-amino-acid chain; its full sequence is Small ribosomal subunit protein uS12m (125 aa).

A disordered region spans residues 1–50 (MPSLNQLIRHGREEKRRTDRTRALDQCPQKQGVCPRVSTRTPKKPNSAPR). Positions 10-23 (HGREEKRRTDRTRA) are enriched in basic and acidic residues.

It belongs to the universal ribosomal protein uS12 family.

The protein localises to the mitochondrion. Functionally, protein S12 is involved in the translation initiation step. In Petunia hybrida (Petunia), this protein is Small ribosomal subunit protein uS12m (RPS12).